The following is a 394-amino-acid chain: Chorismate synthase (394 aa).

Position 48 (R48) interacts with NADP(+). The tract at residues 52–90 (QSMITTSRGEPDEVSIQSGLQDGYTTGTPIGMTIENKDA) is disordered. Residues 66–79 (SIQSGLQDGYTTGT) show a composition bias toward polar residues. Residues 125 to 127 (RSS), G297, 312 to 316 (HAPTS), and R339 contribute to the FMN site.

This sequence belongs to the chorismate synthase family. FMNH2 is required as a cofactor.

The enzyme catalyses 5-O-(1-carboxyvinyl)-3-phosphoshikimate = chorismate + phosphate. It functions in the pathway metabolic intermediate biosynthesis; chorismate biosynthesis; chorismate from D-erythrose 4-phosphate and phosphoenolpyruvate: step 7/7. In terms of biological role, catalyzes the anti-1,4-elimination of the C-3 phosphate and the C-6 proR hydrogen from 5-enolpyruvylshikimate-3-phosphate (EPSP) to yield chorismate, which is the branch point compound that serves as the starting substrate for the three terminal pathways of aromatic amino acid biosynthesis. This reaction introduces a second double bond into the aromatic ring system. The protein is Chorismate synthase of Halobacterium salinarum (strain ATCC 700922 / JCM 11081 / NRC-1) (Halobacterium halobium).